Here is a 33-residue protein sequence, read N- to C-terminus: Vejocalcin (33 aa).

Intrachain disulfides connect Cys-3-Cys-17, Cys-10-Cys-21, and Cys-16-Cys-32. Residues 23-24 are essential for stimulation of [3H]ryanodine binding to RYR1; that stretch reads RR.

As to expression, expressed by the venom gland.

The protein localises to the secreted. Its function is as follows. This toxin stabilizes ryanodine receptor 1 (RyR1) opening in a long-lasting subconductance state (60% of the full conductance state). Furthermore, it triggers calcium release from sarcoplasmic vesicles (31 nM are enough to induce a sharp release, and 65% of the total calcium is released after toxin (100 nM) addition) probably by acting as a cell-penetrating peptide (CPP). In addition, it has been shown to dose-dependently stimulate ryanodine binding to RyR1 (EC(50)=3.7 nM). It also augments the bell-shaped calcium-[3H]ryanodine binding curve that is maximal at about 10 uM calcium concentration. It binds a different site as ryanodine. It acts synergistically with caffeine. In vivo, intracerebroventricular injection into mice induces neurotoxic symptoms, followed by death. This chain is Vejocalcin, found in Vaejovis mexicanus (Mexican scorpion).